Here is a 657-residue protein sequence, read N- to C-terminus: Glycogen debranching enzyme (657 aa).

Residue D336 is the Nucleophile of the active site. E371 acts as the Proton donor in catalysis. The segment covering 458–467 (NEANGEENRD) has biased composition (basic and acidic residues). Residues 458–479 (NEANGEENRDGTNNNYSNNHGK) are disordered.

It belongs to the glycosyl hydrolase 13 family.

It carries out the reaction Hydrolysis of (1-&gt;6)-alpha-D-glucosidic linkages to branches with degrees of polymerization of three or four glucose residues in limit dextrin.. Its pathway is glycan degradation; glycogen degradation. Its function is as follows. Removes maltotriose and maltotetraose chains that are attached by 1,6-alpha-linkage to the limit dextrin main chain, generating a debranched limit dextrin. The protein is Glycogen debranching enzyme of Escherichia coli (strain SE11).